The following is a 333-amino-acid chain: CMP-N-acetylneuraminate-beta-galactosamide-alpha-2,3-sialyltransferase 4 (333 aa).

At 1–8 (MTSKSHWK) the chain is on the cytoplasmic side. Residues 9–26 (LLALALVLVVVMVWYSIS) traverse the membrane as a helical; Signal-anchor for type II membrane protein segment. Residues 27-333 (REDRYIEFFY…MGAVKNLTYF (307 aa)) are Lumenal-facing. N-linked (GlcNAc...) asparagine glycans are attached at residues Asn-61, Asn-131, Asn-310, and Asn-329. A disulfide bridge connects residues Cys-120 and Cys-273.

Belongs to the glycosyltransferase 29 family. In terms of tissue distribution, broadly expressed among tissues with highest levels in the small intestine and colon.

It localises to the golgi apparatus. It is found in the golgi stack membrane. It catalyses the reaction a beta-D-galactosyl-(1-&gt;3)-N-acetyl-beta-D-galactosaminyl derivative + CMP-N-acetyl-beta-neuraminate = an N-acetyl-alpha-neuraminyl-(2-&gt;3)-beta-D-galactosyl-(1-&gt;3)-N-acetyl-beta-D-galactosaminyl derivative + CMP + H(+). The enzyme catalyses a beta-D-galactosyl-(1-&gt;3)-N-acetyl-alpha-D-galactosaminyl derivative + CMP-N-acetyl-beta-neuraminate = an N-acetyl-alpha-neuraminyl-(2-&gt;3)-beta-D-galactosyl-(1-&gt;3)-N-acetyl-alpha-D-galactosaminyl derivative + CMP + H(+). The catalysed reaction is a beta-D-galactosyl-(1-&gt;4)-N-acetyl-beta-D-glucosaminyl derivative + CMP-N-acetyl-beta-neuraminate = an N-acetyl-alpha-neuraminyl-(2-&gt;3)-beta-D-galactosyl-(1-&gt;4)-N-acetyl-beta-D-glucosaminyl derivative + CMP + H(+). It carries out the reaction a ganglioside GM1 (d18:1(4E)) + CMP-N-acetyl-beta-neuraminate = a ganglioside GD1a (d18:1(4E)) + CMP + H(+). It catalyses the reaction a ganglioside GA1 (d18:1(4E)) + CMP-N-acetyl-beta-neuraminate = a ganglioside GM1b (d18:1(4E)) + CMP + H(+). The enzyme catalyses a ganglioside GT1c (d18:1(4E)) + CMP-N-acetyl-beta-neuraminate = a ganglioside GQ1c (d18:1(4E)) + CMP + H(+). The catalysed reaction is a neolactoside nLc4Cer + CMP-N-acetyl-beta-neuraminate = a neolactoside IV(3)-alpha-NeuAc-nLc4Cer + CMP + H(+). It carries out the reaction a neolactoside nLc4Cer(d18:1(4E)) + CMP-N-acetyl-beta-neuraminate = a neolactoside IV(3)-alpha-NeuAc-nLc4Cer(d18:1(4E)) + CMP + H(+). It functions in the pathway protein modification; protein glycosylation. In terms of biological role, a beta-galactoside alpha2-3 sialyltransferase involved in terminal sialylation of glycoproteins and glycolipids. Catalyzes the transfer of sialic acid (N-acetyl-neuraminic acid; Neu5Ac) from the nucleotide sugar donor CMP-Neu5Ac onto acceptor Galbeta-(1-&gt;3)-GalNAc- and Galbeta-(1-&gt;4)-GlcNAc-terminated glycoconjugates through an alpha2-3 linkage. Plays a major role in hemostasis. Responsible for sialylation of plasma VWF/von Willebrand factor, preventing its recognition by asialoglycoprotein receptors (ASGPR) and subsequent clearance. Regulates ASGPR-mediated clearance of platelets. Participates in the biosynthesis of the sialyl Lewis X epitopes, both on O- and N-glycans, which are recognized by SELE/E-selectin, SELP/P-selectin and SELL/L-selectin. Essential for selectin-mediated rolling and adhesion of leukocytes during extravasation. Contributes to adhesion and transendothelial migration of neutrophils likely through terminal sialylation of CXCR2. In glycosphingolipid biosynthesis, sialylates GM1 and GA1 gangliosides to form GD1a and GM1b, respectively. Metabolizes brain c-series ganglioside GT1c forming GQ1c. Synthesizes ganglioside LM1 (IV3Neu5Ac-nLc4Cer), a major structural component of peripheral nerve myelin. The protein is CMP-N-acetylneuraminate-beta-galactosamide-alpha-2,3-sialyltransferase 4 (St3gal4) of Mus musculus (Mouse).